A 369-amino-acid chain; its full sequence is MASWPELIGALLARESLDSARTAWAMDQIMAGAATPAQIAGFAVALRAKGETPAEIGGLIAAMRAHAAPLRIPDEIRARAVDTCGTGGDRSNTVNLSTMAALVVAGAGVPVIKHGNRAASSACGSADLLAELGVAIDLPPAGVEACLRAAGIAFCFARIFHPAMRHVGGPRAEIGVPTAFNILGPLTNPAEPGAQAVGVADARLAPVVAQVLADRGTRALVFRGDDGLDELTPTTTSTIWVIPGGQPSAAGEAAGQTAAPPRREQFDPRDVGIHVPDIAVLRGADAPHNAAVTRALLAGEPGPVRDTVLLAAAASLVAAAGPTDAAITEQIAAALPRAAHAIDSGAAAAVLDRWTDASQAAAAAAAIAR.

5-phospho-alpha-D-ribose 1-diphosphate contacts are provided by residues G85, 88-89, T93, 95-98, 113-121, and S125; these read GD, NLST, and KHGNRAASS. Anthranilate is bound at residue G85. S97 lines the Mg(2+) pocket. N116 contributes to the anthranilate binding site. R171 contacts anthranilate. Residues D229 and E230 each contribute to the Mg(2+) site.

Belongs to the anthranilate phosphoribosyltransferase family. Homodimer. Mg(2+) serves as cofactor.

The catalysed reaction is N-(5-phospho-beta-D-ribosyl)anthranilate + diphosphate = 5-phospho-alpha-D-ribose 1-diphosphate + anthranilate. The protein operates within amino-acid biosynthesis; L-tryptophan biosynthesis; L-tryptophan from chorismate: step 2/5. Catalyzes the transfer of the phosphoribosyl group of 5-phosphorylribose-1-pyrophosphate (PRPP) to anthranilate to yield N-(5'-phosphoribosyl)-anthranilate (PRA). The protein is Anthranilate phosphoribosyltransferase of Frankia alni (strain DSM 45986 / CECT 9034 / ACN14a).